Reading from the N-terminus, the 202-residue chain is MKLLHLDSSILADNSVTRELSAVVADTLRQRHANVETSYRDLAANPIAHLSGEIVGARFAPESDWTATQRSEAALSEQLIEEFIAADVLVIGAPMYNFSIPTQLKSWIDRVAAAGRTFKYTENGPVGLVPNKKVVLVSARGGVHSGEQGSLMDFQEDYVVKVLGFLGVSDVEIIRAEAIGMGPDKRATSIHLAKEAIAKLAL.

FMN-binding positions include Ser9 and 95 to 98; that span reads MYNF.

The protein belongs to the azoreductase type 1 family. As to quaternary structure, homodimer. The cofactor is FMN.

It catalyses the reaction 2 a quinone + NADH + H(+) = 2 a 1,4-benzosemiquinone + NAD(+). It carries out the reaction N,N-dimethyl-1,4-phenylenediamine + anthranilate + 2 NAD(+) = 2-(4-dimethylaminophenyl)diazenylbenzoate + 2 NADH + 2 H(+). Its function is as follows. Quinone reductase that provides resistance to thiol-specific stress caused by electrophilic quinones. Functionally, also exhibits azoreductase activity. Catalyzes the reductive cleavage of the azo bond in aromatic azo compounds to the corresponding amines. This is FMN-dependent NADH:quinone oxidoreductase from Chromobacterium violaceum (strain ATCC 12472 / DSM 30191 / JCM 1249 / CCUG 213 / NBRC 12614 / NCIMB 9131 / NCTC 9757 / MK).